We begin with the raw amino-acid sequence, 363 residues long: Glutamate 5-kinase (363 aa).

Lys-3 contacts ATP. Substrate contacts are provided by Ser-43, Asp-128, and Asn-140. Residues 160 to 161 and 202 to 208 each bind ATP; these read TD and TGGMRTK. Residues 267–349 form the PUA domain; it reads AGAILIDDGA…REIENVLGYS (83 aa).

Belongs to the glutamate 5-kinase family.

The protein localises to the cytoplasm. The catalysed reaction is L-glutamate + ATP = L-glutamyl 5-phosphate + ADP. The protein operates within amino-acid biosynthesis; L-proline biosynthesis; L-glutamate 5-semialdehyde from L-glutamate: step 1/2. In terms of biological role, catalyzes the transfer of a phosphate group to glutamate to form L-glutamate 5-phosphate. The polypeptide is Glutamate 5-kinase (Xanthomonas axonopodis pv. citri (strain 306)).